Here is a 556-residue protein sequence, read N- to C-terminus: Glutamine--tRNA ligase (556 aa).

Residues 34–44 (PEPNGYLHIGH) carry the 'HIGH' region motif. Residues 35-37 (EPN) and 41-47 (HIGHAKS) contribute to the ATP site. The L-glutamine site is built by Asp-67 and Tyr-212. ATP-binding positions include Thr-231, 261 to 262 (RL), and 269 to 271 (MSK). Residues 268 to 272 (VMSKR) carry the 'KMSKS' region motif.

It belongs to the class-I aminoacyl-tRNA synthetase family. As to quaternary structure, monomer.

It localises to the cytoplasm. The catalysed reaction is tRNA(Gln) + L-glutamine + ATP = L-glutaminyl-tRNA(Gln) + AMP + diphosphate. The polypeptide is Glutamine--tRNA ligase (Vibrio parahaemolyticus serotype O3:K6 (strain RIMD 2210633)).